The chain runs to 800 residues: MSEIIQDLSLEDVLGDRFGRYSKYIIQERALPDVRDGLKPVQRRILYAMYSSGNTHDKNFRKSAKTVGDVIGQYHPHGDSSVYEAMVRLSQDWKLRHVLIEMHGNNGSIDNDPPAAMRYTEAKLSLLAEELLRDINKETVSFIPNYDDTTLEPMVLPSRFPNLLVNGSTGISAGYATDIPPHNLAEVIQATLKYIDNPDITVNQLMKYIKGPDFPTGGIIQGIDGIKKAYESGKGRIIVRSKVEEETLRNGRKQLIITEIPYEVNKSSLVKRIDELRADKKVDGIVEVRDETDRTGLRIAIELKKDVNSESIKNYLYKNSDLQISYNFNMVAISDGRPKLMGIRQIIDSYLNHQIEVVANRTKFELDNAEKRMHIVEGLIKALSILDKVIELIRSSKNKRDAKENLIEVFEFTEEQAEAIVMLQLYRLTNTDIVALEGEHKELEALIKQLRHILDNHDALLNVIKEELNEIKKKFKSERLSLIEAEIEEIKIDKEVMVPSEEVILSMTRHGYIKRTSIRSFNASGVEDIGLKDGDSLLKHQEVNTQDTVLVFTNKGRYLFIPVHKLADIRWKELGQHVSQIVPIEEDEVVINVFNEKDFNTDAFYVFATQNGMIKKSTVPLFKTTRFNKPLIATKVKENDDLISVMRFEKDQLITVITNKGMSLTYNTSELSDTGLRAAGVKSINLKAEDFVVMTEGVSENDTILMATQRGSLKRISFKILQVAKRAQRGITLLKELKKNPHRIVAAHVVTGEHSQYTLYSKSNEEHGLINDIHKSEQYTNGSFIVDTDDFGEVIDMYIS.

Positions 31-495 constitute a Topo IIA-type catalytic domain; that stretch reads LPDVRDGLKP…EIEEIKIDKE (465 aa). Y119 functions as the O-(5'-phospho-DNA)-tyrosine intermediate in the catalytic mechanism.

The protein belongs to the type II topoisomerase GyrA/ParC subunit family. ParC type 2 subfamily. Heterotetramer composed of ParC and ParE.

Its subcellular location is the cell membrane. The enzyme catalyses ATP-dependent breakage, passage and rejoining of double-stranded DNA.. In terms of biological role, topoisomerase IV is essential for chromosome segregation. It relaxes supercoiled DNA. Performs the decatenation events required during the replication of a circular DNA molecule. This is DNA topoisomerase 4 subunit A from Staphylococcus aureus (strain N315).